A 245-amino-acid polypeptide reads, in one-letter code: 1-(5-phosphoribosyl)-5-[(5-phosphoribosylamino)methylideneamino] imidazole-4-carboxamide isomerase (245 aa).

Asp-8 acts as the Proton acceptor in catalysis. Catalysis depends on Asp-130, which acts as the Proton donor.

It belongs to the HisA/HisF family.

The protein localises to the cytoplasm. The enzyme catalyses 1-(5-phospho-beta-D-ribosyl)-5-[(5-phospho-beta-D-ribosylamino)methylideneamino]imidazole-4-carboxamide = 5-[(5-phospho-1-deoxy-D-ribulos-1-ylimino)methylamino]-1-(5-phospho-beta-D-ribosyl)imidazole-4-carboxamide. Its pathway is amino-acid biosynthesis; L-histidine biosynthesis; L-histidine from 5-phospho-alpha-D-ribose 1-diphosphate: step 4/9. This Pseudomonas putida (strain W619) protein is 1-(5-phosphoribosyl)-5-[(5-phosphoribosylamino)methylideneamino] imidazole-4-carboxamide isomerase.